A 1463-amino-acid chain; its full sequence is Collagen alpha-1(III) chain (1463 aa).

The N-terminal stretch at 1-23 is a signal peptide; the sequence is MMSFVQCGTWFLLTLLHPSLILA. Residues 24–154 constitute a propeptide, N-terminal propeptide; the sequence is QQSNVDELGC…CPTGGQNYSP (131 aa). One can recognise a VWFC domain in the interval 31–90; sequence LGCNYLGQSYESRDVWKPEPCQICVCDSGSVLCDDIMCDDEPLDCPNPEIPFGECCAICP. Residues 97–1195 form a disordered region; it reads PVIPDGNRPQ…PGPPGAPGPC (1099 aa). A compositionally biased stretch (polar residues) spans 147 to 156; sequence TGGQNYSPQF. The tract at residues 155–169 is nonhelical region (N-terminal); that stretch reads QFDSYDVKSGVGGMG. Residues 164–173 show a composition bias toward gly residues; sequence GVGGMGGYPG. Residues 170–1195 are triple-helical region; it reads GYPGPAGPPG…PGPPGAPGPC (1026 aa). Positions 174 to 184 are enriched in pro residues; that stretch reads PAGPPGPPGPP. Residues 186–198 show a composition bias toward low complexity; that stretch reads SSGHPGSPGSPGY. Basic and acidic residues predominate over residues 228–240; it reads KDGESGRPGRPGE. A compositionally biased stretch (low complexity) spans 250 to 259; sequence KGPAGIPGFP. Position 262 is a 5-hydroxylysine; alternate (K262). K262 carries O-linked (Gal...) hydroxylysine; alternate glycosylation. Residues 265-276 are compositionally biased toward basic and acidic residues; the sequence is RGFDGRNGEKGE. K283 carries the 5-hydroxylysine modification. Composition is skewed to low complexity over residues 310–321 and 354–379; these read PGLPGAAGARGN and PAGS…AGAQ. Gly residues predominate over residues 389–398; that stretch reads GSPGGKGEMG. 2 stretches are compositionally biased toward low complexity: residues 399-429 and 481-502; these read PAGI…QRGP and PGER…PGEK. Residues 527 to 548 are compositionally biased toward gly residues; the sequence is GTPGGPGIRGMPGSPGGPGNDG. Composition is skewed to low complexity over residues 606-615 and 637-652; these read PAGKNGETGP and QGLQ…PGEN. Residues 668 to 677 show a composition bias toward gly residues; that stretch reads GVPGGKGDSG. Over residues 678–691 the composition is skewed to low complexity; that stretch reads APGERGPPGTAGTP. Residues 692 to 708 show a composition bias toward gly residues; that stretch reads GLRGGAGPPGPEGGKGP. The segment covering 709–718 has biased composition (pro residues); the sequence is AGPPGPPGTS. Positions 822–834 are enriched in basic and acidic residues; that stretch reads AKGERGAPGEKGE. Over residues 835–849 the composition is skewed to gly residues; that stretch reads GGPPGAAGPPGGSGP. Position 859 is a 5-hydroxylysine (K859). Residues 863–879 are compositionally biased toward gly residues; it reads GSPGGPGAAGFPGGRGL. The span at 889–906 shows a compositional bias: pro residues; the sequence is PGPPGPSGAPGKDGPPGP. Low complexity-rich tracts occupy residues 907-934 and 945-960; these read AGNS…KGPP and PLGI…LAGP. Position 976 is a 5-hydroxylysine (K976). The segment covering 1045-1054 has biased composition (pro residues); sequence PGHPGPPGPV. Residues 1068-1084 show a composition bias toward low complexity; the sequence is PAGPSGAPGPAGARGAP. 5-hydroxylysine is present on residues K1093 and K1105. The span at 1120 to 1132 shows a compositional bias: low complexity; the sequence is PGAAGHQGAVGSP. Positions 1180-1192 are enriched in pro residues; sequence PGQPGPPGPPGAP. Residues 1219 to 1463 constitute a propeptide, C-terminal propeptide; the sequence is DDPMDFKINT…GVDIGPVCFL (245 aa). The Fibrillar collagen NC1 domain maps to 1229-1463; sequence EEIMSSLKSV…GVDIGPVCFL (235 aa). Cystine bridges form between C1259/C1291, C1299/C1461, and C1369/C1414. Residues D1277, N1279, Q1280, C1282, and D1285 each coordinate Ca(2+).

The protein belongs to the fibrillar collagen family. In terms of assembly, trimers of identical alpha 1(III) chains. The chains are linked to each other by interchain disulfide bonds. Trimers are also cross-linked via hydroxylysines. Interacts with ADGRG1. In terms of processing, O-glycosylated. Post-translationally, prolines at the third position of the tripeptide repeating unit (G-X-Y) are hydroxylated in some or all of the chains.

Its subcellular location is the secreted. The protein localises to the extracellular space. The protein resides in the extracellular matrix. Collagen type III occurs in most soft connective tissues along with type I collagen. Involved in regulation of cortical development. Is the major ligand of ADGRG1 in the developing brain and binding to ADGRG1 inhibits neuronal migration and activates the RhoA pathway by coupling ADGRG1 to GNA13 and possibly GNA12. The polypeptide is Collagen alpha-1(III) chain (Col3a1) (Rattus norvegicus (Rat)).